A 228-amino-acid polypeptide reads, in one-letter code: Large ribosomal subunit protein uL1 (228 aa).

The protein belongs to the universal ribosomal protein uL1 family. As to quaternary structure, part of the 50S ribosomal subunit.

In terms of biological role, binds directly to 23S rRNA. The L1 stalk is quite mobile in the ribosome, and is involved in E site tRNA release. Protein L1 is also a translational repressor protein, it controls the translation of the L11 operon by binding to its mRNA. The polypeptide is Large ribosomal subunit protein uL1 (Clavibacter sepedonicus (Clavibacter michiganensis subsp. sepedonicus)).